The chain runs to 407 residues: Argininosuccinate synthase (407 aa).

Residues 10-18 (AYSGGLDTS) and A37 contribute to the ATP site. Positions 88 and 93 each coordinate L-citrulline. G118 is a binding site for ATP. T120, N124, and D125 together coordinate L-aspartate. Residue N124 participates in L-citrulline binding. 5 residues coordinate L-citrulline: R128, S179, S188, E264, and Y276.

Belongs to the argininosuccinate synthase family. Type 1 subfamily. In terms of assembly, homotetramer.

Its subcellular location is the cytoplasm. It catalyses the reaction L-citrulline + L-aspartate + ATP = 2-(N(omega)-L-arginino)succinate + AMP + diphosphate + H(+). It functions in the pathway amino-acid biosynthesis; L-arginine biosynthesis; L-arginine from L-ornithine and carbamoyl phosphate: step 2/3. The chain is Argininosuccinate synthase from Jannaschia sp. (strain CCS1).